The sequence spans 377 residues: Gap junction gamma-1 protein (377 aa).

Residues 1–18 (MSWSFLTRLLEEINNHST) are Cytoplasmic-facing. A helical membrane pass occupies residues 19–39 (FVGKVWLTVLIIFRIVLTAVG). The Extracellular segment spans residues 40–75 (GESIYYDEQSKFTCNTQQPGCENVCYDAFAPLSHVR). Residues 76–96 (FWVFQIILITTPSIMYLGFAM) form a helical membrane-spanning segment. Residues 97–174 (HRIARQPEMQ…RRIKQDGLMK (78 aa)) lie on the Cytoplasmic side of the membrane. Positions 129 to 163 (DYEEAEDNQEEDPMICEEEEPEKDSEKGDKKKHDG) are disordered. The segment covering 131–151 (EEAEDNQEEDPMICEEEEPEK) has biased composition (acidic residues). Residues 175–197 (VYVLQLLFRSVFEVGFLMGQYIL) form a helical membrane-spanning segment. At 198 to 228 (YGFEVIPFFVCSRKPCPHTVDCFVSRPTEKT) the chain is on the extracellular side. The chain crosses the membrane as a helical span at residues 229–249 (IFLLIMYAVSALCLFLNLCEL). The Cytoplasmic portion of the chain corresponds to 250 to 377 (FHLGIGGIRD…GVGNREKSGL (128 aa)). Disordered stretches follow at residues 265-294 (KKEL…LPNG) and 334-377 (LNPT…KSGL). A compositionally biased stretch (polar residues) spans 337–362 (TGDNTHASRSSSPESNSIAAEQNRLN).

This sequence belongs to the connexin family. Gamma-type subfamily. In terms of assembly, a connexon is composed of a hexamer of connexins.

The protein localises to the cell membrane. It localises to the cell junction. Its subcellular location is the gap junction. One gap junction consists of a cluster of closely packed pairs of transmembrane channels, the connexons, through which materials of low MW diffuse from one cell to a neighboring cell. The polypeptide is Gap junction gamma-1 protein (gjc1) (Xenopus tropicalis (Western clawed frog)).